The primary structure comprises 363 residues: Two-pore potassium channel 1 (363 aa).

A disordered region spans residues 1 to 61 (MSSDAARTPL…DDVKIDEPPP (61 aa)). Over 1–78 (MSSDAARTPL…FSDLNPNLRR (78 aa)) the chain is Cytoplasmic. Basic residues predominate over residues 31–42 (SSRKRRLRRSRS). Residues 79 to 99 (VIMFLALYLTIGTLCFYLVRD) traverse the membrane as a helical segment. Positions 111–130 (DALYFCIVTMTTVGYGDLVP) form an intramembrane region, pore-forming. A helical transmembrane segment spans residues 137–157 (LLACAFVFSGMVLVGHLLSRA). Residues 158–197 (ADYLVEKQEALLVRAFHLRQSFGPTDILKELHTNKLRYKC) lie on the Cytoplasmic side of the membrane. The helical transmembrane segment at 198–218 (YATCLVLVVLFIVGTIFLVMV) threads the bilayer. Residues 225–244 (SAFYCVCSTVTTLGYGDKSF) constitute an intramembrane region (pore-forming). A helical transmembrane segment spans residues 251 to 271 (LFAVFWILTSSICLAQFFLYV). Residues 272–363 (AELNTENKQR…LAQTTSQIQR (92 aa)) are Cytoplasmic-facing. 2 EF-hand domains span residues 288-323 (LTRR…EMGK) and 327-362 (KDIS…SQIQ). The short motif at 296–298 (DLE) is the Endoplasmic reticulum release signal element. Ca(2+) contacts are provided by Asp-301, Asp-303, Asp-305, Glu-312, Asp-340, Asp-342, Ser-344, Thr-346, and Asp-351.

Belongs to the two pore domain potassium channel (TC 1.A.1.7) family. In terms of assembly, homodimer. Interacts with GRF1 and GRF6, but only GRF6 modulates the channel activity. Post-translationally, phosphorylation at Ser-42 increases and stabilizes the interaction with 14-3-3 proteins. Detected in mesophyll cells, guard cells and vascular tissues of the leaves. Expressed in the hilum, where the funiculus is attached during fruit maturation and in the embryo. Also expressed at a lower level in seedlings, root tips and elongation zones, and flowers. Could be detected in mitotically active tissues.

It localises to the vacuole membrane. With respect to regulation, could be activated by protein kinase C. Strongly induced by calcium. Blocked by barium, tetraethylammonium (TEA), quinine and quinidine. Functionally, voltage-independent, large conductance and potassium-selective tonoplast ion channel. Regulated by cytoplasmic calcium and pH. Does not mediate slow-vacuolar (SV) ionic currents, but essential to establish VK currents. Has some permeability for Rb(+) and NH(4)(+), but none for Na(+), Cs(+) or Li(+). Involved in intracellular K(+) redistribution and/or K(+) retranslocation between different tissues. The protein is Two-pore potassium channel 1 (TPK1) of Arabidopsis thaliana (Mouse-ear cress).